We begin with the raw amino-acid sequence, 133 residues long: Small ribosomal subunit protein uS8 (133 aa).

Belongs to the universal ribosomal protein uS8 family. As to quaternary structure, part of the 30S ribosomal subunit. Contacts proteins S5 and S12.

Functionally, one of the primary rRNA binding proteins, it binds directly to 16S rRNA central domain where it helps coordinate assembly of the platform of the 30S subunit. This Synechocystis sp. (strain ATCC 27184 / PCC 6803 / Kazusa) protein is Small ribosomal subunit protein uS8.